Here is a 1597-residue protein sequence, read N- to C-terminus: Glucosyltransferase-I (1597 aa).

Positions 1–38 (MEKNERFKMHKVKKRWVTISVASATMLASALGASVASA) are cleaved as a signal peptide. The interval 52-120 (LTADQTTTNQ…QTTTNANEAK (69 aa)) is disordered. The segment covering 53 to 114 (TADQTTTNQD…STDTAAQTTT (62 aa)) has biased composition (low complexity). Cell wall-binding repeat units lie at residues 157-176 (MSNV…DGNV) and 178-197 (KNFA…TGAY). The catalytic; approximate stretch occupies residues 200–1050 (TSKVEADKSG…DQASNKYLNV (851 aa)). Cell wall-binding repeat units follow at residues 1089–1108 (TDSF…DGYM), 1109–1128 (VTGA…NGAA), 1130–1150 (RNTV…DGKR), 1152–1172 (ENGY…GVMA), 1173–1191 (LGLT…DGVQ), 1193–1214 (KDKI…NGNA), 1216–1236 (TNTF…DGVA), 1237–1256 (VTGA…NGQQ), 1258–1279 (KGDF…SGDM), 1281–1301 (TNTF…DGAA), 1302–1321 (VTGA…NGQQ), 1323–1343 (KGDI…QTGE), 1344–1365 (QVFN…DGTA), 1366–1380 (QTQA…KDGS), 1415–1434 (LTGA…NGHQ), 1436–1457 (KGQL…SGDQ), 1459–1478 (FNKS…DGTA), 1485–1505 (KGQT…EGQY), 1508–1527 (GSGW…DGKV), 1528–1547 (LTGL…NGIQ), 1549–1570 (KGKA…SGSM), and 1572–1591 (TNQW…DGAA). Residues 1099–1597 (LYYFGQDGYM…DGAAVYRGWN (499 aa)) are glucan-binding; approximate.

This sequence belongs to the glycosyl hydrolase 70 family.

The protein resides in the secreted. The enzyme catalyses [(1-&gt;6)-alpha-D-glucosyl](n) + sucrose = [(1-&gt;6)-alpha-D-glucosyl](n+1) + D-fructose. Its function is as follows. Production of extracellular glucans, that are thought to play a key role in the development of the dental plaque because of their ability to adhere to smooth surfaces and mediate the aggregation of bacterial cells and food debris. The sequence is that of Glucosyltransferase-I (gtfI) from Streptococcus downei (Streptococcus sobrinus).